The chain runs to 198 residues: Imidazole glycerol phosphate synthase subunit HisH (198 aa).

The Glutamine amidotransferase type-1 domain occupies 1–194 (MIAIIDYGLG…LKGGFQDDQT (194 aa)). C77 serves as the catalytic Nucleophile. Residues H169 and E171 contribute to the active site.

As to quaternary structure, heterodimer of HisH and HisF.

The protein resides in the cytoplasm. The catalysed reaction is 5-[(5-phospho-1-deoxy-D-ribulos-1-ylimino)methylamino]-1-(5-phospho-beta-D-ribosyl)imidazole-4-carboxamide + L-glutamine = D-erythro-1-(imidazol-4-yl)glycerol 3-phosphate + 5-amino-1-(5-phospho-beta-D-ribosyl)imidazole-4-carboxamide + L-glutamate + H(+). The enzyme catalyses L-glutamine + H2O = L-glutamate + NH4(+). It functions in the pathway amino-acid biosynthesis; L-histidine biosynthesis; L-histidine from 5-phospho-alpha-D-ribose 1-diphosphate: step 5/9. IGPS catalyzes the conversion of PRFAR and glutamine to IGP, AICAR and glutamate. The HisH subunit catalyzes the hydrolysis of glutamine to glutamate and ammonia as part of the synthesis of IGP and AICAR. The resulting ammonia molecule is channeled to the active site of HisF. This is Imidazole glycerol phosphate synthase subunit HisH from Staphylococcus saprophyticus subsp. saprophyticus (strain ATCC 15305 / DSM 20229 / NCIMB 8711 / NCTC 7292 / S-41).